The primary structure comprises 462 residues: Glutamate--tRNA ligase 1 (462 aa).

The 'HIGH' region signature appears at 8 to 18 (PSPTGYLHIGG). Positions 236–240 (KLSKR) match the 'KMSKS' region motif. Lysine 239 lines the ATP pocket.

The protein belongs to the class-I aminoacyl-tRNA synthetase family. Glutamate--tRNA ligase type 1 subfamily. In terms of assembly, monomer.

The protein localises to the cytoplasm. It carries out the reaction tRNA(Glu) + L-glutamate + ATP = L-glutamyl-tRNA(Glu) + AMP + diphosphate. In terms of biological role, catalyzes the attachment of glutamate to tRNA(Glu) in a two-step reaction: glutamate is first activated by ATP to form Glu-AMP and then transferred to the acceptor end of tRNA(Glu). This Sulfurovum sp. (strain NBC37-1) protein is Glutamate--tRNA ligase 1.